The primary structure comprises 237 residues: Ribonuclease PH (237 aa).

Residues R86 and 124-126 contribute to the phosphate site; that span reads GTR.

It belongs to the RNase PH family. Homohexameric ring arranged as a trimer of dimers.

The enzyme catalyses tRNA(n+1) + phosphate = tRNA(n) + a ribonucleoside 5'-diphosphate. Functionally, phosphorolytic 3'-5' exoribonuclease that plays an important role in tRNA 3'-end maturation. Removes nucleotide residues following the 3'-CCA terminus of tRNAs; can also add nucleotides to the ends of RNA molecules by using nucleoside diphosphates as substrates, but this may not be physiologically important. Probably plays a role in initiation of 16S rRNA degradation (leading to ribosome degradation) during starvation. The chain is Ribonuclease PH from Methylobacterium sp. (strain 4-46).